A 402-amino-acid polypeptide reads, in one-letter code: CCA-adding enzyme (402 aa).

ATP-binding residues include Gly-32 and Arg-35. CTP is bound by residues Gly-32 and Arg-35. Asp-45 and Asp-47 together coordinate Mg(2+). Residues Arg-116, Asp-159, Arg-162, Arg-165, and Arg-168 each contribute to the ATP site. Arg-116, Asp-159, Arg-162, Arg-165, and Arg-168 together coordinate CTP.

This sequence belongs to the tRNA nucleotidyltransferase/poly(A) polymerase family. Bacterial CCA-adding enzyme type 3 subfamily. As to quaternary structure, homodimer. Requires Mg(2+) as cofactor.

The enzyme catalyses a tRNA precursor + 2 CTP + ATP = a tRNA with a 3' CCA end + 3 diphosphate. It catalyses the reaction a tRNA with a 3' CCA end + 2 CTP + ATP = a tRNA with a 3' CCACCA end + 3 diphosphate. Catalyzes the addition and repair of the essential 3'-terminal CCA sequence in tRNAs without using a nucleic acid template. Adds these three nucleotides in the order of C, C, and A to the tRNA nucleotide-73, using CTP and ATP as substrates and producing inorganic pyrophosphate. tRNA 3'-terminal CCA addition is required both for tRNA processing and repair. Also involved in tRNA surveillance by mediating tandem CCA addition to generate a CCACCA at the 3' terminus of unstable tRNAs. While stable tRNAs receive only 3'-terminal CCA, unstable tRNAs are marked with CCACCA and rapidly degraded. This chain is CCA-adding enzyme, found in Streptococcus pyogenes serotype M3 (strain ATCC BAA-595 / MGAS315).